The primary structure comprises 562 residues: Putative transport protein YE1478 (562 aa).

A run of 6 helical transmembrane segments spans residues 8-28 (LLNGNYILLLFVVLALGLCLG), 32-52 (LGPIQLGNAIGVLVVSLLLGQ), 66-86 (FMLFIFCVGVEAGPNFFSIFF), 94-114 (MLALVMVGSAMVLALGLGKLF), 118-138 (IGLTAGMLAGSMTSTPVLVGA), and 158-178 (NLSLGYALTYLIGLVSLILGA). RCK C-terminal domains lie at 202–288 (LDTD…SFRN) and 290–373 (KEVF…KIGF). 5 helical membrane passes run 383–403 (LLAFCAFFILGLMIGLITFQF), 406–426 (FSFGIGNAAGLLMAGIMLGFL), 447–467 (FGLMVFMAGVGLSAGGGINSS), 475–495 (MLISGLIVSLVPVVICFIFGA), and 541–561 (IANVLLTLAGSLIVIVWPGIL).

The protein belongs to the AAE transporter (TC 2.A.81) family. YbjL subfamily.

The protein resides in the cell membrane. The protein is Putative transport protein YE1478 of Yersinia enterocolitica serotype O:8 / biotype 1B (strain NCTC 13174 / 8081).